Here is a 476-residue protein sequence, read N- to C-terminus: Probable G-protein coupled receptor No9 (476 aa).

Residues 1–36 (MEGPPLSPAPADNVTLNVSCGRPATLFDWADHRLIS) are Extracellular-facing. N-linked (GlcNAc...) asparagine glycans are attached at residues Asn13 and Asn17. Residues 37–60 (LLALAFLNLMVVAGNLLVVMAVFV) traverse the membrane as a helical segment. Over 61–69 (HSKLRTVTN) the chain is Cytoplasmic. A helical transmembrane segment spans residues 70–93 (LFIVSLACADLLVGMLVLPFSATL). Over 94–103 (EVLDVWLYGD) the chain is Extracellular. The helical transmembrane segment at 104 to 127 (VWCSVWLAVDVWMCTSSILNLCAI) threads the bilayer. Residues Cys106 and Cys192 are joined by a disulfide bond. The Cytoplasmic portion of the chain corresponds to 128–152 (SLDRYLAVSQPISYPSLMSTRRAKQ). Residues 153 to 172 (LIAAVWVLSFVICFPPLVGW) traverse the membrane as a helical segment. The Extracellular portion of the chain corresponds to 173-200 (NDRPGTLIGSRGSSACRLTCELTNERGY). The chain crosses the membrane as a helical span at residues 201-221 (VIYSALGSFFLPSTVMLFFYG). Residues 222-375 (RIYRTAVSTT…FRMETKAAKT (154 aa)) are Cytoplasmic-facing. The span at 266 to 278 (AAAGGARAHGQVR) shows a compositional bias: low complexity. Disordered stretches follow at residues 266 to 293 (AAAGGARAHGQVRLTLSEPGARRQNKPS) and 317 to 351 (DSRPGRRVPQPQRPAKKLSSASQSSEDDSRPPRFI). The chain crosses the membrane as a helical span at residues 376-396 (VGIIVGLFILCWLPFFVCYLV). At 397 to 406 (RGFCADCVPP) the chain is on the extracellular side. The chain crosses the membrane as a helical span at residues 407–430 (LLFSVFFWLGYCNSAVNPCVYALC). The Cytoplasmic segment spans residues 431–476 (SRDFRFAFSSILCKCVCRRGAMERRFRRTLLVGNRSQTEEDCEVAD).

Belongs to the G-protein coupled receptor 1 family.

Its subcellular location is the cell membrane. Its function is as follows. Orphan G-protein coupled receptor. This is Probable G-protein coupled receptor No9 from Amphibalanus amphitrite (Striped barnacle).